A 1226-amino-acid chain; its full sequence is Integrin alpha pat-2 (1226 aa).

The first 25 residues, 1-25, serve as a signal peptide directing secretion; sequence MREGSFPRRIGLLLGLLGLLAGVAT. At 26–1154 the chain is on the extracellular side; the sequence is FNIDTKNVVV…IASEEGRDLP (1129 aa). FG-GAP repeat units follow at residues 27–94, 108–171, 178–233, 234–290, 291–345, 362–421, and 425–488; these read NIDT…TCRE, NGSH…NAEE, EPAR…TDRP, NTEY…MMIN, LTDE…KPQY, GKQI…GVRE, and QKIE…PESA. N-linked (GlcNAc...) asparagine glycans are attached at residues Asn-108, Asn-228, and Asn-290. N-linked (GlcNAc...) asparagine glycosylation occurs at Asn-608. A Cell attachment site motif is present at residues 620-622; that stretch reads RGD. Residue Asn-679 is glycosylated (N-linked (GlcNAc...) asparagine). The tract at residues 709 to 733 is disordered; that stretch reads SVGGDGSKSAPACSPTSDEPDSDGK. 2 N-linked (GlcNAc...) asparagine glycosylation sites follow: Asn-775 and Asn-819. 2 disordered regions span residues 898 to 958 and 982 to 1040; these read LRIT…HVYE and DYEY…ARFS. A compositionally biased stretch (acidic residues) spans 920-931; it reads REEDDESYEDET. The span at 932 to 951 shows a compositional bias: low complexity; the sequence is TTQSQSTRHQSTQHQTHHQS. Residues 985 to 1005 show a composition bias toward acidic residues; it reads YIPDDQEYDGDDFEEEDDEDF. Positions 1010 to 1026 are enriched in basic residues; it reads SKRVKRNPTPKKKKKGG. The span at 1027–1040 shows a compositional bias: basic and acidic residues; it reads EHRGEPRSDKARFS. The chain crosses the membrane as a helical span at residues 1155 to 1177; the sequence is WWLYLLAILIGLAILILLILLLW. Over 1178-1226 the chain is Cytoplasmic; it reads RCGFFKRNRPPTEHAELRADRQPNAQYADSQSRYTSQDQYNQGRHGQML. Residues 1191 to 1226 form a disordered region; it reads HAELRADRQPNAQYADSQSRYTSQDQYNQGRHGQML. Residues 1200–1226 are compositionally biased toward polar residues; it reads PNAQYADSQSRYTSQDQYNQGRHGQML.

The protein belongs to the integrin alpha chain family. As to quaternary structure, heterodimer of an alpha and a beta subunit. Interacts with beta subunit pat-3. Interacts with dep-1. Component of an integrin containing attachment complex, composed of at least pat-2, pat-3, pat-4, pat-6, unc-52, unc-97 and unc-112. In terms of tissue distribution, expressed in body-wall muscle cells, distal tip cells, and vulval tissue.

It localises to the membrane. Required for muscle development probably through the regulation of the actin-myosin cytoskeleton. Component of an integrin containing attachment complex, which is required for muscle maintenance. During the formation of neuromuscular junctions at the larval stage, negatively regulates membrane protrusion from body wall muscles, probably through lamins such as epi-1, lam-2 and unc-52. Required for distal tip cell migration and dorsal pathfinding. Required for egg-laying. May play a role in cell motility and cell-cell interactions. Plays a role in vulval development. Probably within the alpha pat-2/beta pat-3 integrin receptor complex, plays a role in the negative regulation of let-23 signaling and vulval induction. This is probably partly by restricting the mobility of the let-23 receptor on the plasma membrane of vulval cells which thereby attenuates let-23 signaling. This Caenorhabditis elegans protein is Integrin alpha pat-2.